A 40-amino-acid polypeptide reads, in one-letter code: Large ribosomal subunit protein bL36A (40 aa).

It belongs to the bacterial ribosomal protein bL36 family.

In Renibacterium salmoninarum (strain ATCC 33209 / DSM 20767 / JCM 11484 / NBRC 15589 / NCIMB 2235), this protein is Large ribosomal subunit protein bL36A.